Reading from the N-terminus, the 339-residue chain is tRNA-dihydrouridine(20/20a) synthase (339 aa).

Residues 26-28 and Gln78 each bind FMN; that span reads PML. Cys108 acts as the Proton donor in catalysis. Residues Lys147, His180, 220–222, and 242–243 contribute to the FMN site; these read NGG and GR.

It belongs to the Dus family. DusA subfamily. It depends on FMN as a cofactor.

It carries out the reaction 5,6-dihydrouridine(20) in tRNA + NADP(+) = uridine(20) in tRNA + NADPH + H(+). The enzyme catalyses 5,6-dihydrouridine(20) in tRNA + NAD(+) = uridine(20) in tRNA + NADH + H(+). The catalysed reaction is 5,6-dihydrouridine(20a) in tRNA + NADP(+) = uridine(20a) in tRNA + NADPH + H(+). It catalyses the reaction 5,6-dihydrouridine(20a) in tRNA + NAD(+) = uridine(20a) in tRNA + NADH + H(+). Catalyzes the synthesis of 5,6-dihydrouridine (D), a modified base found in the D-loop of most tRNAs, via the reduction of the C5-C6 double bond in target uridines. Specifically modifies U20 and U20a in tRNAs. The polypeptide is tRNA-dihydrouridine(20/20a) synthase (Shigella flexneri).